A 113-amino-acid chain; its full sequence is Prefoldin subunit beta (113 aa).

The protein belongs to the prefoldin subunit beta family. Heterohexamer of two alpha and four beta subunits.

It localises to the cytoplasm. Molecular chaperone capable of stabilizing a range of proteins. Seems to fulfill an ATP-independent, HSP70-like function in archaeal de novo protein folding. The chain is Prefoldin subunit beta from Methanococcus maripaludis (strain DSM 14266 / JCM 13030 / NBRC 101832 / S2 / LL).